Reading from the N-terminus, the 50-residue chain is Photosystem II reaction center protein M (50 aa).

Residues 7–27 form a helical membrane-spanning segment; the sequence is GFVASLLFVGVPTIFLIGLFI.

This sequence belongs to the PsbM family. As to quaternary structure, PSII is composed of 1 copy each of membrane proteins PsbA, PsbB, PsbC, PsbD, PsbE, PsbF, PsbH, PsbI, PsbJ, PsbK, PsbL, PsbM, PsbT, PsbX, PsbY, Psb30/Ycf12, peripheral proteins PsbO, CyanoQ (PsbQ), PsbU, PsbV and a large number of cofactors. It forms dimeric complexes.

It localises to the cellular thylakoid membrane. Functionally, one of the components of the core complex of photosystem II (PSII). PSII is a light-driven water:plastoquinone oxidoreductase that uses light energy to abstract electrons from H(2)O, generating O(2) and a proton gradient subsequently used for ATP formation. It consists of a core antenna complex that captures photons, and an electron transfer chain that converts photonic excitation into a charge separation. This subunit is found at the monomer-monomer interface. This chain is Photosystem II reaction center protein M, found in Prochlorococcus marinus (strain MIT 9301).